An 862-amino-acid polypeptide reads, in one-letter code: Cytosolic carboxypeptidase 2 (862 aa).

The Peptidase M14 domain occupies 359-629 (YPYTYTDLQC…HVCDTLLDFC (271 aa)). 3 residues coordinate Zn(2+): His425, Glu428, and His521. Glu593 (proton donor/acceptor) is an active-site residue. 3 disordered regions span residues 669 to 692 (SDIP…DGPP), 704 to 728 (NQKT…EQYQ), and 750 to 836 (STLQ…PNWS). Low complexity predominate over residues 674–689 (SDIESSTSGSDSSLSD). The span at 711 to 721 (NPKKKRLQTRK) shows a compositional bias: basic residues. The segment covering 813 to 825 (ASCSPKRSTNSSL) has biased composition (polar residues).

The protein belongs to the peptidase M14 family. Interacts with RARRES1, KIF11 and MAPRE1. Requires Zn(2+) as cofactor. In terms of tissue distribution, widely expressed. Expressed in tissues with motile cilia such as testis, lung and trachea. Also detected in brain, eye, muscle, pancreas, intestine, stomach, pituitary, spleen, adrenal and kidney. Expressed in mitral and granular cells in brain.

Its subcellular location is the cytoplasm. The protein resides in the cytosol. The protein localises to the cytoskeleton. It localises to the microtubule organizing center. It is found in the centrosome. Its subcellular location is the centriole. The protein resides in the cilium basal body. The catalysed reaction is (L-glutamyl)(n+1)-gamma-L-glutamyl-L-glutamyl-[protein] + H2O = (L-glutamyl)(n)-gamma-L-glutamyl-L-glutamyl-[protein] + L-glutamate. Its activity is regulated as follows. Inhibited by RARRES1. Functionally, metallocarboxypeptidase that mediates deglutamylation of tubulin and non-tubulin target proteins. Catalyzes the removal of polyglutamate side chains present on the gamma-carboxyl group of glutamate residues within the C-terminal tail of tubulin protein. Specifically cleaves tubulin long-side-chains, while it is not able to remove the branching point glutamate. Also catalyzes the removal of polyglutamate residues from the carboxy-terminus of non-tubulin proteins such as MYLK. This Mus musculus (Mouse) protein is Cytosolic carboxypeptidase 2.